The primary structure comprises 94 residues: Aspartyl/glutamyl-tRNA(Asn/Gln) amidotransferase subunit C (94 aa).

Belongs to the GatC family. In terms of assembly, heterotrimer of A, B and C subunits.

It catalyses the reaction L-glutamyl-tRNA(Gln) + L-glutamine + ATP + H2O = L-glutaminyl-tRNA(Gln) + L-glutamate + ADP + phosphate + H(+). The enzyme catalyses L-aspartyl-tRNA(Asn) + L-glutamine + ATP + H2O = L-asparaginyl-tRNA(Asn) + L-glutamate + ADP + phosphate + 2 H(+). Functionally, allows the formation of correctly charged Asn-tRNA(Asn) or Gln-tRNA(Gln) through the transamidation of misacylated Asp-tRNA(Asn) or Glu-tRNA(Gln) in organisms which lack either or both of asparaginyl-tRNA or glutaminyl-tRNA synthetases. The reaction takes place in the presence of glutamine and ATP through an activated phospho-Asp-tRNA(Asn) or phospho-Glu-tRNA(Gln). This chain is Aspartyl/glutamyl-tRNA(Asn/Gln) amidotransferase subunit C, found in Campylobacter jejuni subsp. doylei (strain ATCC BAA-1458 / RM4099 / 269.97).